Consider the following 822-residue polypeptide: Glycerol-3-phosphate acyltransferase (822 aa).

Residues 304 to 309 (CHRSHM) carry the HXXXXD motif motif.

This sequence belongs to the GPAT/DAPAT family.

It localises to the cell inner membrane. It catalyses the reaction sn-glycerol 3-phosphate + an acyl-CoA = a 1-acyl-sn-glycero-3-phosphate + CoA. Its pathway is phospholipid metabolism; CDP-diacylglycerol biosynthesis; CDP-diacylglycerol from sn-glycerol 3-phosphate: step 1/3. This chain is Glycerol-3-phosphate acyltransferase, found in Yersinia enterocolitica serotype O:8 / biotype 1B (strain NCTC 13174 / 8081).